The following is a 400-amino-acid chain: tRNA-specific 2-thiouridylase MnmA (400 aa).

Residues 19-26 (AMSGGVDS) and leucine 45 contribute to the ATP site. Cysteine 113 (nucleophile) is an active-site residue. Cysteine 113 and cysteine 210 form a disulfide bridge. Glycine 137 provides a ligand contact to ATP. The interval 160–162 (RDQ) is interaction with tRNA. Cysteine 210 acts as the Cysteine persulfide intermediate in catalysis.

It belongs to the MnmA/TRMU family.

Its subcellular location is the cytoplasm. It carries out the reaction S-sulfanyl-L-cysteinyl-[protein] + uridine(34) in tRNA + AH2 + ATP = 2-thiouridine(34) in tRNA + L-cysteinyl-[protein] + A + AMP + diphosphate + H(+). Functionally, catalyzes the 2-thiolation of uridine at the wobble position (U34) of tRNA, leading to the formation of s(2)U34. The protein is tRNA-specific 2-thiouridylase MnmA of Rhodopseudomonas palustris (strain BisA53).